Reading from the N-terminus, the 283-residue chain is 4-diphosphocytidyl-2-C-methyl-D-erythritol kinase (283 aa).

Residue lysine 11 is part of the active site. Residue proline 94–alanine 104 participates in ATP binding. Aspartate 136 is an active-site residue.

This sequence belongs to the GHMP kinase family. IspE subfamily.

It catalyses the reaction 4-CDP-2-C-methyl-D-erythritol + ATP = 4-CDP-2-C-methyl-D-erythritol 2-phosphate + ADP + H(+). It functions in the pathway isoprenoid biosynthesis; isopentenyl diphosphate biosynthesis via DXP pathway; isopentenyl diphosphate from 1-deoxy-D-xylulose 5-phosphate: step 3/6. Its function is as follows. Catalyzes the phosphorylation of the position 2 hydroxy group of 4-diphosphocytidyl-2C-methyl-D-erythritol. This chain is 4-diphosphocytidyl-2-C-methyl-D-erythritol kinase, found in Acetivibrio thermocellus (strain ATCC 27405 / DSM 1237 / JCM 9322 / NBRC 103400 / NCIMB 10682 / NRRL B-4536 / VPI 7372) (Clostridium thermocellum).